The sequence spans 96 residues: MLRLDLQFFASKKGVGSTKNGRDSQSKRLGAKRADGQMVTGGSILYRQRGTKIYPGVNVGRGGDDTLYAKVDGVVRFERLGRDRKQVSVYPVAQEA.

A propeptide spanning residues 1–9 (MLRLDLQFF) is cleaved from the precursor. The disordered stretch occupies residues 14 to 35 (GVGSTKNGRDSQSKRLGAKRAD).

It belongs to the bacterial ribosomal protein bL27 family. In terms of processing, the N-terminus is cleaved by ribosomal processing cysteine protease Prp.

The sequence is that of Large ribosomal subunit protein bL27 from Bacillus cytotoxicus (strain DSM 22905 / CIP 110041 / 391-98 / NVH 391-98).